A 517-amino-acid chain; its full sequence is Bifunctional purine biosynthesis protein PurH (517 aa).

Positions 1 to 145 (MSPLALVSVS…KNHADVAVLV (145 aa)) constitute an MGS-like domain.

Belongs to the PurH family.

It carries out the reaction (6R)-10-formyltetrahydrofolate + 5-amino-1-(5-phospho-beta-D-ribosyl)imidazole-4-carboxamide = 5-formamido-1-(5-phospho-D-ribosyl)imidazole-4-carboxamide + (6S)-5,6,7,8-tetrahydrofolate. It catalyses the reaction IMP + H2O = 5-formamido-1-(5-phospho-D-ribosyl)imidazole-4-carboxamide. The protein operates within purine metabolism; IMP biosynthesis via de novo pathway; 5-formamido-1-(5-phospho-D-ribosyl)imidazole-4-carboxamide from 5-amino-1-(5-phospho-D-ribosyl)imidazole-4-carboxamide (10-formyl THF route): step 1/1. It functions in the pathway purine metabolism; IMP biosynthesis via de novo pathway; IMP from 5-formamido-1-(5-phospho-D-ribosyl)imidazole-4-carboxamide: step 1/1. This is Bifunctional purine biosynthesis protein PurH from Prochlorococcus marinus (strain MIT 9515).